A 354-amino-acid polypeptide reads, in one-letter code: UDP-N-acetylglucosamine--N-acetylmuramyl-(pentapeptide) pyrophosphoryl-undecaprenol N-acetylglucosamine transferase (354 aa).

Residues 15 to 17 (TGG), N127, R163, S191, I242, 261 to 266 (ALTVSE), and Q286 contribute to the UDP-N-acetyl-alpha-D-glucosamine site.

This sequence belongs to the glycosyltransferase 28 family. MurG subfamily.

The protein resides in the cell inner membrane. It catalyses the reaction di-trans,octa-cis-undecaprenyl diphospho-N-acetyl-alpha-D-muramoyl-L-alanyl-D-glutamyl-meso-2,6-diaminopimeloyl-D-alanyl-D-alanine + UDP-N-acetyl-alpha-D-glucosamine = di-trans,octa-cis-undecaprenyl diphospho-[N-acetyl-alpha-D-glucosaminyl-(1-&gt;4)]-N-acetyl-alpha-D-muramoyl-L-alanyl-D-glutamyl-meso-2,6-diaminopimeloyl-D-alanyl-D-alanine + UDP + H(+). It participates in cell wall biogenesis; peptidoglycan biosynthesis. Functionally, cell wall formation. Catalyzes the transfer of a GlcNAc subunit on undecaprenyl-pyrophosphoryl-MurNAc-pentapeptide (lipid intermediate I) to form undecaprenyl-pyrophosphoryl-MurNAc-(pentapeptide)GlcNAc (lipid intermediate II). This Pasteurella multocida (strain Pm70) protein is UDP-N-acetylglucosamine--N-acetylmuramyl-(pentapeptide) pyrophosphoryl-undecaprenol N-acetylglucosamine transferase.